Here is a 313-residue protein sequence, read N- to C-terminus: Deoxyribonucleoside regulator (313 aa).

Residues 23–42 constitute a DNA-binding region (H-T-H motif); sequence QQQIAEQLNISRPTVSRLLQ.

Belongs to the SorC transcriptional regulatory family. Homooctamer.

In terms of biological role, negative regulator of the dra-nupC-pdp operon. DeoR binds cooperatively to the operator DNA, which consists of a palindrome and a direct repeat sequence located 3' to the palindrome. The protein is Deoxyribonucleoside regulator of Bacillus subtilis (strain 168).